The chain runs to 193 residues: dTTP/UTP pyrophosphatase (193 aa).

The active-site Proton acceptor is the D77.

This sequence belongs to the Maf family. YhdE subfamily. The cofactor is a divalent metal cation.

It is found in the cytoplasm. It carries out the reaction dTTP + H2O = dTMP + diphosphate + H(+). The enzyme catalyses UTP + H2O = UMP + diphosphate + H(+). In terms of biological role, nucleoside triphosphate pyrophosphatase that hydrolyzes dTTP and UTP. May have a dual role in cell division arrest and in preventing the incorporation of modified nucleotides into cellular nucleic acids. This is dTTP/UTP pyrophosphatase from Parabacteroides distasonis (strain ATCC 8503 / DSM 20701 / CIP 104284 / JCM 5825 / NCTC 11152).